A 208-amino-acid chain; its full sequence is Putative RING finger protein 413R (208 aa).

The disordered stretch occupies residues 1–87; that stretch reads MDAIFYPLPI…RHWSDDDSDR (87 aa). Residues 22–71 are compositionally biased toward acidic residues; the sequence is DFQEEDFQEEDFQEEDFQEEDFQEEDEDEEDEEVNEYPSDLDDEYPDSDY. Positions 72-82 are enriched in basic and acidic residues; that stretch reads YDERSDRHWSD. The stretch at 83–147 forms a coiled coil; it reads DDSDRDLDDL…KLTTLSKNLT (65 aa). The RING-type zinc finger occupies 148–196; the sequence is CIICLTNQVQILTIPCGHLIMCNPCSLNLNNSVCTRGVNSNYEKCPKCR.

The sequence is that of Putative RING finger protein 413R (EF2) from Acheta domesticus (House cricket).